Consider the following 260-residue polypeptide: Tryptophan synthase alpha chain (260 aa).

Catalysis depends on proton acceptor residues E52 and D63.

This sequence belongs to the TrpA family. In terms of assembly, tetramer of two alpha and two beta chains.

It carries out the reaction (1S,2R)-1-C-(indol-3-yl)glycerol 3-phosphate + L-serine = D-glyceraldehyde 3-phosphate + L-tryptophan + H2O. It functions in the pathway amino-acid biosynthesis; L-tryptophan biosynthesis; L-tryptophan from chorismate: step 5/5. In terms of biological role, the alpha subunit is responsible for the aldol cleavage of indoleglycerol phosphate to indole and glyceraldehyde 3-phosphate. This Streptococcus thermophilus (strain ATCC BAA-250 / LMG 18311) protein is Tryptophan synthase alpha chain.